Consider the following 201-residue polypeptide: dITP/XTP pyrophosphatase (201 aa).

8 to 13 (TTNENK) serves as a coordination point for substrate. D68 functions as the Proton acceptor in the catalytic mechanism. D68 is a binding site for Mg(2+). Residues S69, 155–158 (FGYD), K177, and 182–183 (HR) each bind substrate.

Belongs to the HAM1 NTPase family. As to quaternary structure, homodimer. It depends on Mg(2+) as a cofactor.

It catalyses the reaction XTP + H2O = XMP + diphosphate + H(+). It carries out the reaction dITP + H2O = dIMP + diphosphate + H(+). The catalysed reaction is ITP + H2O = IMP + diphosphate + H(+). Functionally, pyrophosphatase that catalyzes the hydrolysis of nucleoside triphosphates to their monophosphate derivatives, with a high preference for the non-canonical purine nucleotides XTP (xanthosine triphosphate), dITP (deoxyinosine triphosphate) and ITP. Seems to function as a house-cleaning enzyme that removes non-canonical purine nucleotides from the nucleotide pool, thus preventing their incorporation into DNA/RNA and avoiding chromosomal lesions. The protein is dITP/XTP pyrophosphatase of Borrelia garinii subsp. bavariensis (strain ATCC BAA-2496 / DSM 23469 / PBi) (Borreliella bavariensis).